The primary structure comprises 176 residues: Inorganic pyrophosphatase (176 aa).

The substrate site is built by Lys-30, Arg-44, and Tyr-56. Mg(2+)-binding residues include Asp-66, Asp-71, and Asp-103. Tyr-142 is a binding site for substrate.

Belongs to the PPase family. Homohexamer. It depends on Mg(2+) as a cofactor.

The protein resides in the cytoplasm. The enzyme catalyses diphosphate + H2O = 2 phosphate + H(+). Catalyzes the hydrolysis of inorganic pyrophosphate (PPi) forming two phosphate ions. This Salmonella typhi protein is Inorganic pyrophosphatase.